The following is a 347-amino-acid chain: UDP-3-O-acylglucosamine N-acyltransferase (347 aa).

His-241 (proton acceptor) is an active-site residue.

This sequence belongs to the transferase hexapeptide repeat family. LpxD subfamily. As to quaternary structure, homotrimer.

The enzyme catalyses a UDP-3-O-[(3R)-3-hydroxyacyl]-alpha-D-glucosamine + a (3R)-hydroxyacyl-[ACP] = a UDP-2-N,3-O-bis[(3R)-3-hydroxyacyl]-alpha-D-glucosamine + holo-[ACP] + H(+). Its pathway is bacterial outer membrane biogenesis; LPS lipid A biosynthesis. In terms of biological role, catalyzes the N-acylation of UDP-3-O-acylglucosamine using 3-hydroxyacyl-ACP as the acyl donor. Is involved in the biosynthesis of lipid A, a phosphorylated glycolipid that anchors the lipopolysaccharide to the outer membrane of the cell. This is UDP-3-O-acylglucosamine N-acyltransferase from Neisseria gonorrhoeae (strain ATCC 700825 / FA 1090).